The sequence spans 313 residues: Foldase protein PrsA (313 aa).

The signal sequence occupies residues 1–20 (MKKKLLAGAITLLSVATLAA). A lipid anchor (N-palmitoyl cysteine) is attached at Cys21. The S-diacylglycerol cysteine moiety is linked to residue Cys21. One can recognise a PpiC domain in the interval 143–241 (TPDVTAQIIR…SQYYIVKLTK (99 aa)).

Belongs to the PrsA family.

It is found in the cell membrane. The catalysed reaction is [protein]-peptidylproline (omega=180) = [protein]-peptidylproline (omega=0). In terms of biological role, plays a major role in protein secretion by helping the post-translocational extracellular folding of several secreted proteins. The sequence is that of Foldase protein PrsA from Streptococcus pneumoniae serotype 4 (strain ATCC BAA-334 / TIGR4).